The sequence spans 240 residues: Myogenic factor 6 (240 aa).

A bHLH domain is found at 91–142 (DRRKAATLRERRRLKKINEAFEALKRRTVANPNQRLPKVEILRSAINYIERL).

Efficient DNA binding requires dimerization with another bHLH protein. Skeletal muscle.

The protein localises to the nucleus. In terms of biological role, involved in muscle differentiation (myogenic factor). Induces fibroblasts to differentiate into myoblasts. Probable sequence specific DNA-binding protein. The sequence is that of Myogenic factor 6 (myf6) from Xenopus laevis (African clawed frog).